The primary structure comprises 320 residues: MSTPFKMERGVKYRDAAKTSIIPVKNIDPNQDLLKKPEWMKIKLPASSAKIESIKNGMRRHGLHSVCEEASCPNLHECFNHGTATFMILGAICTRRCPFCDVAHGKPLPPDPEEPQKLAETIQDMKLKYVVITSVDRDDLPDRGAGHFSECVKAVRELNPNIKIEILVPDFRGRVTQALEKLKDNPPDVFNHNLENVPRLYKEIRPGADYGWSLKLLREFKEMFPNIPTKSGLMVGLGETNEEILQVMQDLRDNGVTMLTLGQYLQPSRHHLPVARYVPPTEFDEFRDKANEMGFEHAACGPFVRSSYHADLQASGGLVK.

[4Fe-4S] cluster-binding residues include C67, C72, C78, C93, C97, C100, and S307. Residues 79–296 form the Radical SAM core domain; it reads FNHGTATFMI…RDKANEMGFE (218 aa).

This sequence belongs to the radical SAM superfamily. Lipoyl synthase family. It depends on [4Fe-4S] cluster as a cofactor.

Its subcellular location is the cytoplasm. It carries out the reaction [[Fe-S] cluster scaffold protein carrying a second [4Fe-4S](2+) cluster] + N(6)-octanoyl-L-lysyl-[protein] + 2 oxidized [2Fe-2S]-[ferredoxin] + 2 S-adenosyl-L-methionine + 4 H(+) = [[Fe-S] cluster scaffold protein] + N(6)-[(R)-dihydrolipoyl]-L-lysyl-[protein] + 4 Fe(3+) + 2 hydrogen sulfide + 2 5'-deoxyadenosine + 2 L-methionine + 2 reduced [2Fe-2S]-[ferredoxin]. It functions in the pathway protein modification; protein lipoylation via endogenous pathway; protein N(6)-(lipoyl)lysine from octanoyl-[acyl-carrier-protein]: step 2/2. In terms of biological role, catalyzes the radical-mediated insertion of two sulfur atoms into the C-6 and C-8 positions of the octanoyl moiety bound to the lipoyl domains of lipoate-dependent enzymes, thereby converting the octanoylated domains into lipoylated derivatives. The sequence is that of Lipoyl synthase from Haemophilus influenzae (strain PittEE).